We begin with the raw amino-acid sequence, 349 residues long: Biotin synthase (349 aa).

Over residues 1–11 the composition is skewed to basic and acidic residues; the sequence is MLEGIEREAAE. The disordered stretch occupies residues 1-30; that stretch reads MLEGIEREAAEHSNGCSGPAGHAPPAGAPR. Residues 64–283 form the Radical SAM core domain; that stretch reads HEVQLCTLLS…IAVARVMMPR (220 aa). Cysteine 79, cysteine 83, and cysteine 86 together coordinate [4Fe-4S] cluster. [2Fe-2S] cluster-binding residues include cysteine 123, cysteine 155, cysteine 215, and arginine 287.

This sequence belongs to the radical SAM superfamily. Biotin synthase family. In terms of assembly, homodimer. [4Fe-4S] cluster serves as cofactor. The cofactor is [2Fe-2S] cluster.

The catalysed reaction is (4R,5S)-dethiobiotin + (sulfur carrier)-SH + 2 reduced [2Fe-2S]-[ferredoxin] + 2 S-adenosyl-L-methionine = (sulfur carrier)-H + biotin + 2 5'-deoxyadenosine + 2 L-methionine + 2 oxidized [2Fe-2S]-[ferredoxin]. Its pathway is cofactor biosynthesis; biotin biosynthesis; biotin from 7,8-diaminononanoate: step 2/2. Its function is as follows. Catalyzes the conversion of dethiobiotin (DTB) to biotin by the insertion of a sulfur atom into dethiobiotin via a radical-based mechanism. The polypeptide is Biotin synthase (Sorangium cellulosum (strain So ce56) (Polyangium cellulosum (strain So ce56))).